The sequence spans 84 residues: U21-theraphotoxin-Cg1a 3 (84 aa).

An N-terminal signal peptide occupies residues Met1 to Ala21. A propeptide spanning residues Glu22–Arg47 is cleaved from the precursor. Disulfide bonds link Cys49/Cys63, Cys56/Cys68, and Cys62/Cys76. A Valine amide modification is found at Val82.

It belongs to the neurotoxin 10 (Hwtx-1) family. 05 (F4a) subfamily. In terms of tissue distribution, expressed by the venom gland.

The protein resides in the secreted. In terms of biological role, probable ion channel inhibitor. This is U21-theraphotoxin-Cg1a 3 from Chilobrachys guangxiensis (Chinese earth tiger tarantula).